We begin with the raw amino-acid sequence, 203 residues long: ADP-ribosylation factor-like protein 6-interacting protein 1 (203 aa).

At 1 to 41 the chain is on the cytoplasmic side; that stretch reads MAEGDNRSSNLLAVETASLEEQLQGWGEVMLMADKVLRWER. A helical membrane pass occupies residues 42–62; the sequence is AWFPPAIMGVVSLLFLIIYYL. The Lumenal portion of the chain corresponds to 63–65; the sequence is DPS. The helical transmembrane segment at 66–86 threads the bilayer; it reads VLSGVSCFVMFLCLADYLVPI. The Cytoplasmic segment spans residues 87–133; the sequence is LAPRIFGSNKWTTEQQQRFHEICSNLVKTRRRAVGWWKRLFSLKEEK. The chain crosses the membrane as a helical span at residues 134–175; it reads PKMYFMTMIISLAAVAWVGQQVHNLLLTYLIVTFVLLLPGLN. Residues 176-203 lie on the Lumenal side of the membrane; it reads QHGIILKYIGMAKREINKLLKQKEKKNE.

The protein belongs to the ARL6ip family. Homooligomer. Heterodimer with ARL6IP5. Interacts with ARL6. Interacts with TMEM33. Interacts with ATL1. In terms of tissue distribution, expressed in the cerebral cortex, cerebellum, hippocampus, olfactory bulbs, medulla oblongate and limbic system (at protein level). Ubiquitous. Expressed in all hematopoietic cell lineages, with highest levels in early myeloid progenitor cells.

The protein resides in the endomembrane system. It localises to the endoplasmic reticulum membrane. Its subcellular location is the endoplasmic reticulum. Positively regulates SLC1A1/EAAC1-mediated glutamate transport by increasing its affinity for glutamate in a PKC activity-dependent manner. Promotes the catalytic efficiency of SLC1A1/EAAC1 probably by reducing its interaction with ARL6IP5, a negative regulator of SLC1A1/EAAC1-mediated glutamate transport. Plays a role in the formation and stabilization of endoplasmic reticulum tubules. Negatively regulates apoptosis, possibly by modulating the activity of caspase-9 (CASP9). Inhibits cleavage of CASP9-dependent substrates and downstream markers of apoptosis but not CASP9 itself. May be involved in protein transport, membrane trafficking, or cell signaling during hematopoietic maturation. This Mus musculus (Mouse) protein is ADP-ribosylation factor-like protein 6-interacting protein 1 (Arl6ip1).